The following is a 151-amino-acid chain: UPF0178 protein Sde_3033 (151 aa).

It belongs to the UPF0178 family.

The protein is UPF0178 protein Sde_3033 of Saccharophagus degradans (strain 2-40 / ATCC 43961 / DSM 17024).